The chain runs to 143 residues: Nucleoside diphosphate kinase (143 aa).

Residues Lys11, Phe59, Arg87, Thr93, Arg104, and Asn114 each contribute to the ATP site. His117 acts as the Pros-phosphohistidine intermediate in catalysis.

This sequence belongs to the NDK family. Homotetramer. It depends on Mg(2+) as a cofactor.

The protein localises to the cytoplasm. It catalyses the reaction a 2'-deoxyribonucleoside 5'-diphosphate + ATP = a 2'-deoxyribonucleoside 5'-triphosphate + ADP. It carries out the reaction a ribonucleoside 5'-diphosphate + ATP = a ribonucleoside 5'-triphosphate + ADP. Major role in the synthesis of nucleoside triphosphates other than ATP. The ATP gamma phosphate is transferred to the NDP beta phosphate via a ping-pong mechanism, using a phosphorylated active-site intermediate. The chain is Nucleoside diphosphate kinase from Pseudoalteromonas atlantica (strain T6c / ATCC BAA-1087).